A 307-amino-acid chain; its full sequence is Protease HtpX homolog 1 (307 aa).

The next 2 helical transmembrane spans lie at 7-27 and 38-60; these read LKTL…IITY and IFTA…YLVG. His-133 contacts Zn(2+). Residue Glu-134 is part of the active site. His-137 serves as a coordination point for Zn(2+). A run of 2 helical transmembrane segments spans residues 145–165 and 180–200; these read IGMA…FLLF and LILG…TFLL. Residue Glu-212 coordinates Zn(2+).

The protein belongs to the peptidase M48B family. Requires Zn(2+) as cofactor.

It is found in the cell membrane. The protein is Protease HtpX homolog 1 of Sulfolobus acidocaldarius (strain ATCC 33909 / DSM 639 / JCM 8929 / NBRC 15157 / NCIMB 11770).